The chain runs to 78 residues: Antitoxin VapB27 (78 aa).

Residues 1 to 45 (MKAVVDAAGRIVVPKPLREALGLQPGSTVEISRYGAGLHLIPTGR) enclose the SpoVT-AbrB domain.

It belongs to the VapB family. In terms of assembly, interacts with cognate toxin VapC27 and non-cognate toxins MazF6 and VapC40. Interaction with MazF6 and MazF9 partially neutralizes the toxins.

Antitoxin component of a type II toxin-antitoxin (TA) system. Cognate toxin is VapC27. Upon expression in E.coli partially counteracts the ribonuclease activity of non-cognate toxins MazF6 and MazF9. This chain is Antitoxin VapB27 (vapB27), found in Mycobacterium tuberculosis (strain ATCC 25618 / H37Rv).